Consider the following 440-residue polypeptide: Phosphatidylglycerol--prolipoprotein diacylglyceryl transferase (440 aa).

4 helical membrane passes run 21-41 (VPIR…LLIG), 53-73 (GVIY…GRLY), 96-116 (IWDG…GAWI), and 122-142 (GIPL…AQAI). Arg144 contacts a 1,2-diacyl-sn-glycero-3-phospho-(1'-sn-glycerol). Helical transmembrane passes span 189–209 (VALV…LIFV) and 256–276 (INSF…MAAP). Positions 280–440 (EDPESLRGNQ…ARLRDRLSGR (161 aa)) are disordered. The span at 299-330 (EPATVAATTEAATEGVAAPADGAEAAGADATA) shows a compositional bias: low complexity. Residues 332–346 (RPEESAEPDVEKPES) are compositionally biased toward basic and acidic residues. Residues 347-417 (EETEAEAAEE…PEQPVAEEPE (71 aa)) are compositionally biased toward acidic residues. Positions 424–440 (ETKRRWGARLRDRLSGR) are enriched in basic and acidic residues.

The protein belongs to the Lgt family.

It is found in the cell membrane. The catalysed reaction is L-cysteinyl-[prolipoprotein] + a 1,2-diacyl-sn-glycero-3-phospho-(1'-sn-glycerol) = an S-1,2-diacyl-sn-glyceryl-L-cysteinyl-[prolipoprotein] + sn-glycerol 1-phosphate + H(+). It participates in protein modification; lipoprotein biosynthesis (diacylglyceryl transfer). Its function is as follows. Catalyzes the transfer of the diacylglyceryl group from phosphatidylglycerol to the sulfhydryl group of the N-terminal cysteine of a prolipoprotein, the first step in the formation of mature lipoproteins. The sequence is that of Phosphatidylglycerol--prolipoprotein diacylglyceryl transferase from Mycobacterium avium (strain 104).